Here is a 169-residue protein sequence, read N- to C-terminus: Putative hydrogenase maturation protease MJ0631 (169 aa).

Belongs to the peptidase A31 family.

The polypeptide is Putative hydrogenase maturation protease MJ0631 (Methanocaldococcus jannaschii (strain ATCC 43067 / DSM 2661 / JAL-1 / JCM 10045 / NBRC 100440) (Methanococcus jannaschii)).